The primary structure comprises 91 residues: Small ribosomal subunit protein bS18 (91 aa).

It belongs to the bacterial ribosomal protein bS18 family. As to quaternary structure, part of the 30S ribosomal subunit. Forms a tight heterodimer with protein bS6.

Its function is as follows. Binds as a heterodimer with protein bS6 to the central domain of the 16S rRNA, where it helps stabilize the platform of the 30S subunit. The protein is Small ribosomal subunit protein bS18 of Syntrophotalea carbinolica (strain DSM 2380 / NBRC 103641 / GraBd1) (Pelobacter carbinolicus).